Consider the following 91-residue polypeptide: MTKLERQVTICNKLGLHARAATKLAILASEFDAEITIVQGEKKASAASVLGLLMLETGMGKTITLLGKGQDADAALDAICALVDAKFDEAS.

Positions 3-90 (KLERQVTICN…ALVDAKFDEA (88 aa)) constitute an HPr domain. His-17 acts as the Pros-phosphohistidine intermediate in catalysis.

It belongs to the HPr family.

The protein localises to the cytoplasm. Functionally, component of the phosphoenolpyruvate-dependent nitrogen-metabolic phosphotransferase system (nitrogen-metabolic PTS), that seems to be involved in regulating nitrogen metabolism. The phosphoryl group from phosphoenolpyruvate (PEP) is transferred to the phosphoryl carrier protein NPr by enzyme I-Ntr. Phospho-NPr then transfers it to EIIA-Ntr. Could function in the transcriptional regulation of sigma-54 dependent operons in conjunction with the NPr (PtsO) and EIIA-Ntr (PtsN) proteins. The polypeptide is Phosphocarrier protein NPr (ptsO) (Shewanella violacea (strain JCM 10179 / CIP 106290 / LMG 19151 / DSS12)).